The following is a 249-amino-acid chain: MRMLPDFFTGNWDDMFQGLLETEYVFDFPEPSEASEEMSLHDLFDVEVDGFEEDANQEAVDGMFPERLLSEAESAAESGSGDSGVGEELLPVDLDLKCYEDGLPPSDPETDEATEAEEEAAMPTYVNENENELVLDCPENPGRGCRACDFHRGTSGNPEAMCALCYMRLTGHCIYSPISDAEGESESGSPEDTDFPHPLTATPPHGIVRTIPCRVSCRRRPAVECIEDLLEEDPTDEPLNLSLKRPKCS.

The tract at residues 38-46 (MSLHDLFDV) is interaction with RB1 in competition with E2F1. An interaction with UBE2I region spans residues 74–131 (SAAESGSGDSGVGEELLPVDLDLKCYEDGLPPSDPETDEATEAEEEAAMPTYVNENEN). The short motif at 96 to 100 (LKCYE) is the LXCXE motif, interaction with host RB1 and TMEM173/STING element. A zinc finger lies at 145–165 (CRACDFHRGTSGNPEAMCALC). The disordered stretch occupies residues 180-203 (DAEGESESGSPEDTDFPHPLTATP). A compositionally biased stretch (acidic residues) spans 181–193 (AEGESESGSPEDT). The PXDLS motif, CTBP-binding signature appears at 238–242 (PLNLS). The Nuclear localization signal signature appears at 244 to 248 (KRPKC).

This sequence belongs to the adenoviridae E1A protein family. Interacts with host UBE2I; this interaction interferes with polySUMOylation. Interacts with host RB1; this interaction induces the aberrant dissociation of RB1-E2F1 complex thereby disrupting the activity of RB1 and activating E2F1-regulated genes. Interacts with host ATF7; the interaction enhances ATF7-mediated viral transactivation activity which requires the zinc binding domains of both proteins. Isoform early E1A 32 kDa protein and isoform early E1A 26 kDa protein interact (via N-terminus) with CUL1 and E3 ubiquitin ligase RBX1; these interactions inhibit RBX1-CUL1-dependent elongation reaction of ubiquitin chains and attenuate ubiquitination of SCF(FBXW7) target proteins. Interacts (via PXLXP motif) with host ZMYND11/BS69 (via MYND-type zinc finger); this interaction inhibits E1A mediated transactivation. Interacts with host EP300; this interaction stimulates the acetylation of RB1 by recruiting EP300 and RB1 into a multimeric-protein complex. Interacts with host CTBP1 and CTBP2; this interaction seems to potentiate viral replication. Interacts with host DCAF7. Interacts with host DYRK1A. Interacts with host KPNA4; this interaction allows E1A import into the host nucleus. Interacts with host EP400; this interaction stabilizes MYC. Interacts with host TBP protein; this interaction probably disrupts the TBP-TATA complex. Interacts (via LXCXE motif) with host TMEM173/STING; this interaction impairs the ability of TMEM173/STING to sense cytosolic DNA and promote the production of type I interferon (IFN-alpha and IFN-beta). Interacts (via C-terminus) with host ZBED1/hDREF (via C-terminus); the interaction is direct.

It localises to the host nucleus. Its function is as follows. Plays a role in viral genome replication by driving entry of quiescent cells into the cell cycle. Stimulation of progression from G1 to S phase allows the virus to efficiently use the cellular DNA replicating machinery to achieve viral genome replication. E1A protein has both transforming and trans-activating activities. Induces the disassembly of the E2F1 transcription factor from RB1 by direct competition for the same binding site on RB1, with subsequent transcriptional activation of E2F1-regulated S-phase genes and of the E2 region of the adenoviral genome. Release of E2F1 leads to the ARF-mediated inhibition of MDM2 and causes TP53/p53 to accumulate because it is not targeted for degradation by MDM2-mediated ubiquitination anymore. This increase in TP53, in turn, would arrest the cell proliferation and direct its death but this effect is counteracted by the viral protein E1B-55K. Inactivation of the ability of RB1 to arrest the cell cycle is critical for cellular transformation, uncontrolled cellular growth and proliferation induced by viral infection. Interaction with RBX1 and CUL1 inhibits ubiquitination of the proteins targeted by SCF(FBXW7) ubiquitin ligase complex, and may be linked to unregulated host cell proliferation. The tumorigenesis-restraining activity of E1A may be related to the disruption of the host CtBP-CtIP complex through the CtBP binding motif. Interaction with host TMEM173/STING impairs the ability of TMEM173/STING to sense cytosolic DNA and promote the production of type I interferon (IFN-alpha and IFN-beta). Promotes the sumoylation of host ZBED1/hDREF with SUMO1. This chain is Early E1A protein, found in Homo sapiens (Human).